The sequence spans 360 residues: Uptake hydrogenase small subunit (360 aa).

Positions 1-43 (MVETFYEVMRRQGISRRSFLKYCSLTATSLGLGPSFLPQIAHA) form a signal peptide, tat-type signal. Positions 60, 63, 158, 192, 230, 233, 258, and 264 each coordinate [4Fe-4S] cluster. Residues cysteine 273, cysteine 292, and cysteine 295 each contribute to the [3Fe-4S] cluster site.

It belongs to the [NiFe]/[NiFeSe] hydrogenase small subunit family. Heterodimer of a large and a small subunit. It depends on [4Fe-4S] cluster as a cofactor. [3Fe-4S] cluster serves as cofactor. Predicted to be exported by the Tat system. The position of the signal peptide cleavage has been experimentally proven.

It localises to the cell membrane. It carries out the reaction H2 + A = AH2. In terms of biological role, this enzyme recycles the H(2) produced by nitrogenase to increase the production of ATP and to protect nitrogenase against inhibition or damage by O(2) under carbon- or phosphate-limited conditions. This Cupriavidus necator (strain ATCC 17699 / DSM 428 / KCTC 22496 / NCIMB 10442 / H16 / Stanier 337) (Ralstonia eutropha) protein is Uptake hydrogenase small subunit (hoxK).